The primary structure comprises 347 residues: Protein pelota homolog (347 aa).

This sequence belongs to the eukaryotic release factor 1 family. Pelota subfamily. As to quaternary structure, monomer. The cofactor is a divalent metal cation.

Its subcellular location is the cytoplasm. Functionally, may function in recognizing stalled ribosomes, interact with stem-loop structures in stalled mRNA molecules, and effect endonucleolytic cleavage of the mRNA. May play a role in the release non-functional ribosomes and degradation of damaged mRNAs. Has endoribonuclease activity. The chain is Protein pelota homolog from Methanocaldococcus jannaschii (strain ATCC 43067 / DSM 2661 / JAL-1 / JCM 10045 / NBRC 100440) (Methanococcus jannaschii).